A 68-amino-acid chain; its full sequence is Phycobilisome 7.8 kDa linker polypeptide, allophycocyanin-associated, core (68 aa).

Residues 2–57 (ARLFKVTACVPSQTRIRTQRELQNTYFTKLVPFENWFREQQRIMKMGGKIVKVELA) form the CpcD-like domain.

This sequence belongs to the phycobilisome linker protein family.

It is found in the cellular thylakoid membrane. Functionally, rod linker protein, associated with allophycocyanin. Linker polypeptides determine the state of aggregation and the location of the disk-shaped phycobiliprotein units within the phycobilisome and modulate their spectroscopic properties in order to mediate a directed and optimal energy transfer. The sequence is that of Phycobilisome 7.8 kDa linker polypeptide, allophycocyanin-associated, core (apcC) from Microchaete diplosiphon (Fremyella diplosiphon).